The sequence spans 122 residues: Large ribosomal subunit protein uL14 (122 aa).

Belongs to the universal ribosomal protein uL14 family. Part of the 50S ribosomal subunit. Forms a cluster with proteins L3 and L19. In the 70S ribosome, L14 and L19 interact and together make contacts with the 16S rRNA in bridges B5 and B8.

Its function is as follows. Binds to 23S rRNA. Forms part of two intersubunit bridges in the 70S ribosome. This chain is Large ribosomal subunit protein uL14, found in Desulforudis audaxviator (strain MP104C).